The sequence spans 1308 residues: D-lysergyl-peptide-synthetase subunit 2 (1308 aa).

Residues Glu-261–Arg-658 are adenylation (A) domain. The 69-residue stretch at Ile-803–Lys-871 folds into the Carrier domain. O-(pantetheine 4'-phosphoryl)serine is present on Ser-835. Residues Glu-910–Asp-1299 form a condensation (C) domain region.

This sequence belongs to the NRP synthetase family.

Its pathway is alkaloid biosynthesis; ergot alkaloid biosynthesis. In terms of biological role, D-lysergyl-peptide-synthetase subunit 2; part of the gene cluster that mediates the biosynthesis of fungal ergot alkaloid. DmaW catalyzes the first step of ergot alkaloid biosynthesis by condensing dimethylallyl diphosphate (DMAP) and tryptophan to form 4-dimethylallyl-L-tryptophan. The second step is catalyzed by the methyltransferase easF that methylates 4-dimethylallyl-L-tryptophan in the presence of S-adenosyl-L-methionine, resulting in the formation of 4-dimethylallyl-L-abrine. The catalase easC and the FAD-dependent oxidoreductase easE then transform 4-dimethylallyl-L-abrine to chanoclavine-I which is further oxidized by EasD in the presence of NAD(+), resulting in the formation of chanoclavine-I aldehyde. Agroclavine dehydrogenase easG then mediates the conversion of chanoclavine-I aldehyde to agroclavine via a non-enzymatic adduct reaction: the substrate is an iminium intermediate that is formed spontaneously from chanoclavine-I aldehyde in the presence of glutathione. The presence of easA is not required to complete this reaction. Further conversion of agroclavine to paspalic acid is a two-step process involving oxidation of agroclavine to elymoclavine and of elymoclavine to paspalic acid, the second step being performed by the elymoclavine oxidase cloA. Paspalic acid is then further converted to D-lysergic acid. Ergopeptines are assembled from D-lysergic acid and three different amino acids by the D-lysergyl-peptide-synthetases composed each of a monomudular and a trimodular nonribosomal peptide synthetase subunit. LpsB and lpsC encode the monomodular subunits responsible for D-lysergic acid activation and incorporation into the ergopeptine backbone. LpsA1 and A2 subunits encode the trimodular nonribosomal peptide synthetase assembling the tripeptide portion of ergopeptines. LpsA1 is responsible for formation of the major ergopeptine, ergotamine, and lpsA2 for alpha-ergocryptine, the minor ergopeptine of the total alkaloid mixture elaborated by C.purpurea. D-lysergyl-tripeptides are assembled by the nonribosomal peptide synthetases and released as N-(D-lysergyl-aminoacyl)-lactams. Cyclolization of the D-lysergyl-tripeptides is performed by the Fe(2+)/2-ketoglutarate-dependent dioxygenase easH which introduces a hydroxyl group into N-(D-lysergyl-aminoacyl)-lactam at alpha-C of the aminoacyl residue followed by spontaneous condensation with the terminal lactam carbonyl group. The polypeptide is D-lysergyl-peptide-synthetase subunit 2 (Claviceps purpurea (Ergot fungus)).